The sequence spans 398 residues: Methionine import ATP-binding protein MetN 2 (398 aa).

Residues 43–282 enclose the ABC transporter domain; sequence VSLEQVGKVF…PRHGATRALL (240 aa). Residue 79-86 coordinates ATP; the sequence is GRSGAGKS.

It belongs to the ABC transporter superfamily. Methionine importer (TC 3.A.1.24) family. The complex is composed of two ATP-binding proteins (MetN), two transmembrane proteins (MetI) and a solute-binding protein (MetQ).

It localises to the cell inner membrane. The enzyme catalyses L-methionine(out) + ATP + H2O = L-methionine(in) + ADP + phosphate + H(+). It carries out the reaction D-methionine(out) + ATP + H2O = D-methionine(in) + ADP + phosphate + H(+). In terms of biological role, part of the ABC transporter complex MetNIQ involved in methionine import. Responsible for energy coupling to the transport system. This chain is Methionine import ATP-binding protein MetN 2, found in Burkholderia lata (strain ATCC 17760 / DSM 23089 / LMG 22485 / NCIMB 9086 / R18194 / 383).